The following is a 145-amino-acid chain: Putative pre-16S rRNA nuclease (145 aa).

Belongs to the YqgF nuclease family.

Its subcellular location is the cytoplasm. Its function is as follows. Could be a nuclease involved in processing of the 5'-end of pre-16S rRNA. The chain is Putative pre-16S rRNA nuclease from Pseudomonas fluorescens (strain Pf0-1).